We begin with the raw amino-acid sequence, 417 residues long: Queuine tRNA-ribosyltransferase accessory subunit 2 (417 aa).

Zn(2+) is bound by residues Cys324, Cys326, Cys329, and His355.

The protein belongs to the queuine tRNA-ribosyltransferase family. QTRT2 subfamily. Heterodimer of a catalytic subunit and an accessory subunit. The cofactor is Zn(2+).

The protein localises to the cytoplasm. Non-catalytic subunit of the queuine tRNA-ribosyltransferase (TGT) that catalyzes the base-exchange of a guanine (G) residue with queuine (Q) at position 34 (anticodon wobble position) in tRNAs with GU(N) anticodons (tRNA-Asp, -Asn, -His and -Tyr), resulting in the hypermodified nucleoside queuosine (7-(((4,5-cis-dihydroxy-2-cyclopenten-1-yl)amino)methyl)-7-deazaguanosine). The protein is Queuine tRNA-ribosyltransferase accessory subunit 2 of Drosophila virilis (Fruit fly).